We begin with the raw amino-acid sequence, 702 residues long: Polyribonucleotide nucleotidyltransferase (702 aa).

Mg(2+)-binding residues include D485 and D491. The region spanning 552-611 (PKTSTLQIDPEKIRDVIGAGGKVINKIIADTGVKIDIKEDGLVYVSSAESEGVKEAVKII) is the KH domain. Residues 621–689 (GEIYLGKVTK…SQGRINLSRK (69 aa)) form the S1 motif domain.

The protein belongs to the polyribonucleotide nucleotidyltransferase family. It depends on Mg(2+) as a cofactor.

Its subcellular location is the cytoplasm. The enzyme catalyses RNA(n+1) + phosphate = RNA(n) + a ribonucleoside 5'-diphosphate. Its function is as follows. Involved in mRNA degradation. Catalyzes the phosphorolysis of single-stranded polyribonucleotides processively in the 3'- to 5'-direction. The protein is Polyribonucleotide nucleotidyltransferase of Clostridium perfringens (strain 13 / Type A).